The primary structure comprises 110 residues: Cytochrome c oxidase subunit 4B (110 aa).

Helical transmembrane passes span Tyr27 to Ala47, Gly50 to Phe70, and Leu88 to Ile108.

It belongs to the cytochrome c oxidase bacterial subunit 4 family.

The protein resides in the cell membrane. The catalysed reaction is 4 Fe(II)-[cytochrome c] + O2 + 8 H(+)(in) = 4 Fe(III)-[cytochrome c] + 2 H2O + 4 H(+)(out). The chain is Cytochrome c oxidase subunit 4B (ctaF) from Bacillus subtilis (strain 168).